The primary structure comprises 1250 residues: Protein suppressor of variegation 3-7 (1250 aa).

Disordered regions lie at residues 107–148 and 160–186; these read LNNP…HSYH and HDPG…GGMR. The span at 132–141 shows a compositional bias: polar residues; the sequence is STKTEPSSDA. A compositionally biased stretch (acidic residues) spans 164 to 175; it reads DSQDDDDEDDES. 3 positions are modified to phosphoserine: Ser165, Ser175, and Ser176. C2H2-type zinc fingers lie at residues 217–236, 319–343, 425–446, and 487–512; these read CLYC…IQQH, CRIC…TKGH, CTLC…TRAH, and CSVC…SEKH. Residues 343–354 show a composition bias toward basic and acidic residues; that stretch reads HMEALRNLDSDK. The segment at 343-398 is disordered; the sequence is HMEALRNLDSDKRSRKRKRSKSNSVTNSGGDEAEREKESEPEVGPEDAQDTPVVMM. The disordered stretch occupies residues 525–564; sequence VGSADGRGGDNMDEEEAAASDQAQSSQTDDSEDNDDDNWS. Over residues 543-552 the composition is skewed to low complexity; that stretch reads ASDQAQSSQT. Residues 553–563 show a composition bias toward acidic residues; the sequence is DDSEDNDDDNW. Residues 605-629 form a C2H2-type 5 zinc finger; that stretch reads QICKFCRVRFHNEAAKARHELSARH. The interval 642 to 684 is disordered; it reads KLHQGTNTQTKHNAQDDEESQEQDEEYGEEEEDAEEDSQSNFD. Acidic residues predominate over residues 657–679; it reads DDEESQEQDEEYGEEEEDAEEDS. 2 consecutive C2H2-type zinc fingers follow at residues 737-761 and 829-852; these read CKLC…TSRH and CRVC…SRKH. Residues 851 to 860 are compositionally biased toward basic and acidic residues; that stretch reads KHVENKERQR. Residues 851-915 form a disordered region; that stretch reads KHVENKERQR…PLAKRSRRSM (65 aa). 2 positions are modified to phosphoserine: Ser871 and Ser873. Residues 879 to 897 show a composition bias toward basic and acidic residues; that stretch reads DAERQESGMDKESENDMSV. Residue Ser975 is modified to Phosphoserine. The region spanning 987–1026 is the BESS domain; that stretch reads RHVMDLFFDSISPTMKSLPPDLAAEGKSKIMQLVCSLELR. Over residues 1032-1055 the composition is skewed to low complexity; sequence ATTPTPATVSASSKWPSSTTVTPV. Disordered regions lie at residues 1032–1060, 1079–1116, 1154–1180, and 1205–1236; these read ATTP…TPPA, TTPH…NGSA, QSRT…ADLS, and NTPQ…NGCQ. 2 stretches are compositionally biased toward polar residues: residues 1079-1091 and 1104-1114; these read TTPH…QNNN and GASSAQVTING. Over residues 1206 to 1224 the composition is skewed to low complexity; sequence TPQMQQPQQAQASITSSTP.

Interacts with Su(var)39 through the BESS domain.

It is found in the nucleus. Its function is as follows. Dose-limiting factor in position-effect variegation, the inactivation in some cells of a gene translocated next to heterochromatin. It could play a role in chromosome condensation. In Drosophila melanogaster (Fruit fly), this protein is Protein suppressor of variegation 3-7 (Su(var)3-7).